Here is a 372-residue protein sequence, read N- to C-terminus: GDP-mannose 4,6 dehydratase (372 aa).

Positions 1–22 (MAHAPASCPSSRNSGDGDKGKP) are disordered. Residue Ala-2 is modified to N-acetylalanine. Residues 30–35 (GITGQD), 55–58 (RRSS), 86–87 (DL), 108–112 (LGAQS), and Tyr-123 each bind NADP(+). Thr-155 is an active-site residue. Catalysis depends on nucleophile residues Glu-157 and Tyr-179. Lys-183, His-209, and Arg-214 together coordinate NADP(+). A Phosphotyrosine modification is found at Tyr-323.

The protein belongs to the NAD(P)-dependent epimerase/dehydratase family. GDP-mannose 4,6-dehydratase subfamily. NADP(+) is required as a cofactor.

It catalyses the reaction GDP-alpha-D-mannose = GDP-4-dehydro-alpha-D-rhamnose + H2O. Its pathway is nucleotide-sugar biosynthesis; GDP-L-fucose biosynthesis via de novo pathway; GDP-L-fucose from GDP-alpha-D-mannose: step 1/2. Its activity is regulated as follows. Inhibited by GDP-fucose. In terms of biological role, catalyzes the conversion of GDP-D-mannose to GDP-4-dehydro-6-deoxy-D-mannose. The protein is GDP-mannose 4,6 dehydratase (GMDS) of Cricetulus griseus (Chinese hamster).